The chain runs to 290 residues: Signal peptidase I (290 aa).

Over 1–13 (MKFLRSVYAFCSS) the chain is Cytoplasmic. Residues 14–34 (WVGTIVIVLLVIFFIAQAFII) traverse the membrane as a helical segment. Residues 35–290 (PSRSMVGTLY…KIIKKENATH (256 aa)) lie on the Extracellular side of the membrane. Catalysis depends on residues serine 38 and lysine 106.

It belongs to the peptidase S26 family.

The protein resides in the cell membrane. It catalyses the reaction Cleavage of hydrophobic, N-terminal signal or leader sequences from secreted and periplasmic proteins.. This is Signal peptidase I (lepB) from Helicobacter pylori (strain ATCC 700392 / 26695) (Campylobacter pylori).